Consider the following 148-residue polypeptide: Large ribosomal subunit protein bL9 (148 aa).

Belongs to the bacterial ribosomal protein bL9 family.

Its function is as follows. Binds to the 23S rRNA. This is Large ribosomal subunit protein bL9 from Pseudomonas putida (strain ATCC 700007 / DSM 6899 / JCM 31910 / BCRC 17059 / LMG 24140 / F1).